The sequence spans 142 residues: Pro-vaccinia growth factor (142 aa).

The first 18 residues, 1–18 (MSMKYLMLLFAAMIIRSF), serve as a signal peptide directing secretion. Over 19-100 (ADSGNAIETT…SENPNTTTSY (82 aa)) the chain is Extracellular. N34 is a glycosylation site (N-linked (GlcNAc...) asparagine; by host). The EGF-like domain maps to 41–81 (AIRLCGPEGDGYCLHGDCIHARDIDGMYCRCSHGYTGIRCQ). Disulfide bonds link C45-C58, C53-C69, and C71-C80. N-linked (GlcNAc...) asparagine; by host glycosylation is present at N95. The chain crosses the membrane as a helical span at residues 101-121 (IPSPGIMLVLVGIIIIITCCL). Residues 122 to 142 (LSVYRFTRRTNKLPLQDMVVP) lie on the Cytoplasmic side of the membrane.

It belongs to the orthopoxvirus OPG019 family. As to quaternary structure, vaccinia growth factor interacts with host EGFR and promotes EGFR dimerization.

The protein resides in the host membrane. The protein localises to the secreted. Functionally, stimulates cellular proliferation (hyperplasia)and mobility around infected cells to promote rapid and efficient spread of infection. This effect is beneficial for virus replication in vivo, because poxviruses replicate possibly better in proliferating cells than in quiescent cells. Acts by binding host EGFR, inducing its dimerization, autophosphorylation and leading to activation of several cellular pathways regulating cell proliferation or cell survival. The activation by host EGFR of mitogen activated protein kinases (MAPK) and extracellular-signal regulated kinases (ERK) are essential for the positive effect of vaccinia growth factor on poxvirus virulence in vivo. The protein is Pro-vaccinia growth factor (OPG019) of Vaccinia virus (strain Copenhagen) (VACV).